Consider the following 986-residue polypeptide: MKIYSYNELKTRFAEYAKPGEFSITSADTFRIIRLHYDEKQGCLFAFCNTNIEKRVLQFYFKVKLNLYSYKQCYDKHIFPSCRNKCISYTTFVAPGVEGNCLNKINVIKYERNKAAPSDNAACLDKFLHNVNRVHMQTPFVEGAYMRFKKTQRCQNNYVGGSTTRMFNLQHFYEDFELVDEMTLTSGIMPVLSCYDIETHSDGHNMSKASVDCIMSIGFVVYKNDEYARFCFMYHKLPTEIPETHDDDTHVVMFQNEVDMITAFFDMIKITNPDVILDFNGDVFDLPYILGRLNKTKMLLKRYDLPAAAPTTKLFINKLGNKVDTYYFNYYIHIDLYKFFSSDSNQHKVENFQLNTISSYYLGENKIDLPWTEMVKMYNTRRLDVIAKYNVQDCMLPIKLFVKLKMADSVYSQCILHRLCTDDVICNISHLISVACFYAAITNTRINESTGKEEPDPYFFNKNDLSIISGQFNADKATAGISNLKRKLTPLKNIPKDAINLGPANQTVKYKGGKVLQPRASIYKNAFSLDFNSLYLTIMIAICACLSNLVLCEDGNVYLNHNSRAIVVKLLLKLLSERCKFKKNRDNQSESAFLYDLYDQKQNSVKRTANSIYGYYGIFYKVLANYITRVGRNQLRRAISLIEGLSNDPEILKKFNLNSIGFKVVYGDTDSTFVLPTFNYNEIFDETDTLKQICTHVETRVNSSFTDGYKMAFENLMKVLIILKKKKYCYLNSENKIVYKGWLVKKDMPVFMRIAFRTAVEQILRHLDINKCLQSLQASFYEYYDEFAKSKPMTDYSFSMTYNDNPGKKRKSADDNNEGPSPKRRVITVARHCREILVNKGTDFVPGNGDRIPYLLIDIEGKVTEKAYPLRLFDPVKMRISWIKHMGILCTFMNELLEIFGDEQKDNLAKCFTAIMQKYMQNQLYDRKEPVLVKINQKKCSVKRKRDDDDDNNDDDDDDGCDSSDSENDTQCANNTYKFCLYKIKK.

Disordered regions lie at residues 804–824 and 944–969; these read DNPGKKRKSADDNNEGPSPKR and RKRDDDDDNNDDDDDDGCDSSDSEND. Acidic residues predominate over residues 948–968; sequence DDDDNNDDDDDDGCDSSDSEN.

This sequence belongs to the DNA polymerase type-B family.

It catalyses the reaction DNA(n) + a 2'-deoxyribonucleoside 5'-triphosphate = DNA(n+1) + diphosphate. In terms of biological role, replicates the viral genome, host DNA polymerases cannot substitute for the viral enzyme in this process. The sequence is that of DNA polymerase (POL) from Bombyx mori (Silk moth).